Here is a 622-residue protein sequence, read N- to C-terminus: 1-deoxy-D-xylulose-5-phosphate synthase (622 aa).

Residues H80 and 121–123 contribute to the thiamine diphosphate site; that span reads GHS. Mg(2+) is bound at residue D152. Thiamine diphosphate-binding positions include 153-154, N181, Y288, and E370; that span reads GA. N181 is a binding site for Mg(2+).

The protein belongs to the transketolase family. DXPS subfamily. As to quaternary structure, homodimer. Mg(2+) serves as cofactor. Requires thiamine diphosphate as cofactor.

It catalyses the reaction D-glyceraldehyde 3-phosphate + pyruvate + H(+) = 1-deoxy-D-xylulose 5-phosphate + CO2. It functions in the pathway metabolic intermediate biosynthesis; 1-deoxy-D-xylulose 5-phosphate biosynthesis; 1-deoxy-D-xylulose 5-phosphate from D-glyceraldehyde 3-phosphate and pyruvate: step 1/1. Functionally, catalyzes the acyloin condensation reaction between C atoms 2 and 3 of pyruvate and glyceraldehyde 3-phosphate to yield 1-deoxy-D-xylulose-5-phosphate (DXP). The chain is 1-deoxy-D-xylulose-5-phosphate synthase from Shewanella loihica (strain ATCC BAA-1088 / PV-4).